A 184-amino-acid chain; its full sequence is Peptidyl-tRNA hydrolase (184 aa).

Tyr17 lines the tRNA pocket. His22 serves as the catalytic Proton acceptor. TRNA-binding residues include Phe71, Asn73, and Asn119.

The protein belongs to the PTH family. As to quaternary structure, monomer.

The protein resides in the cytoplasm. The catalysed reaction is an N-acyl-L-alpha-aminoacyl-tRNA + H2O = an N-acyl-L-amino acid + a tRNA + H(+). Hydrolyzes ribosome-free peptidyl-tRNAs (with 1 or more amino acids incorporated), which drop off the ribosome during protein synthesis, or as a result of ribosome stalling. Functionally, catalyzes the release of premature peptidyl moieties from peptidyl-tRNA molecules trapped in stalled 50S ribosomal subunits, and thus maintains levels of free tRNAs and 50S ribosomes. This is Peptidyl-tRNA hydrolase from Corynebacterium diphtheriae (strain ATCC 700971 / NCTC 13129 / Biotype gravis).